A 411-amino-acid polypeptide reads, in one-letter code: ATP-dependent RNA helicase eIF4A (411 aa).

Positions 1–23 (MSKPEDTSAAAAAPAGEAGNNLN) are disordered. Residues 9–19 (AAAAAPAGEAG) show a composition bias toward low complexity. Positions 38 to 66 (DNFDNMELKEELLRGVYAYGFERPSAIQA) match the Q motif motif. In terms of domain architecture, Helicase ATP-binding spans 69-239 (IVPVIKGHDV…KKFMRDPIRI (171 aa)). Residue 82-89 (AQSGTGKT) coordinates ATP. The DEAD box motif lies at 187–190 (DEAD). A Helicase C-terminal domain is found at 250–411 (GIKQFYVAVE…EMPLNVADLI (162 aa)).

It belongs to the DEAD box helicase family. eIF4A subfamily. In terms of assembly, component of the eIF4F complex, which composition varies with external and internal environmental conditions. It is composed of at least eIF4A, eIF4E and eIF4G.

The protein localises to the cytoplasm. The enzyme catalyses ATP + H2O = ADP + phosphate + H(+). Its function is as follows. ATP-dependent RNA helicase which is a subunit of the eIF4F complex involved in cap recognition and is required for mRNA binding to ribosome. In the current model of translation initiation, eIF4A unwinds RNA secondary structures in the 5'-UTR of mRNAs which is necessary to allow efficient binding of the small ribosomal subunit, and subsequent scanning for the initiator codon. The protein is ATP-dependent RNA helicase eIF4A (TIF1) of Mycosarcoma maydis (Corn smut fungus).